The following is a 325-amino-acid chain: GMP reductase (325 aa).

Cysteine 174 functions as the Thioimidate intermediate in the catalytic mechanism. 203–226 (IIADGGIRTNGDIAKSIRFGANMV) contributes to the NADP(+) binding site.

The protein belongs to the IMPDH/GMPR family. GuaC type 2 subfamily.

It catalyses the reaction IMP + NH4(+) + NADP(+) = GMP + NADPH + 2 H(+). Its function is as follows. Catalyzes the irreversible NADPH-dependent deamination of GMP to IMP. It functions in the conversion of nucleobase, nucleoside and nucleotide derivatives of G to A nucleotides, and in maintaining the intracellular balance of A and G nucleotides. The protein is GMP reductase of Latilactobacillus sakei subsp. sakei (strain 23K) (Lactobacillus sakei subsp. sakei).